Reading from the N-terminus, the 1417-residue chain is DNA-directed RNA polymerase subunit beta' (1417 aa).

Zn(2+)-binding residues include cysteine 68, cysteine 70, cysteine 83, and cysteine 86. 3 residues coordinate Mg(2+): aspartate 458, aspartate 460, and aspartate 462. Residues cysteine 811, cysteine 884, cysteine 891, and cysteine 894 each contribute to the Zn(2+) site.

It belongs to the RNA polymerase beta' chain family. The RNAP catalytic core consists of 2 alpha, 1 beta, 1 beta' and 1 omega subunit. When a sigma factor is associated with the core the holoenzyme is formed, which can initiate transcription. Mg(2+) serves as cofactor. The cofactor is Zn(2+).

It catalyses the reaction RNA(n) + a ribonucleoside 5'-triphosphate = RNA(n+1) + diphosphate. Functionally, DNA-dependent RNA polymerase catalyzes the transcription of DNA into RNA using the four ribonucleoside triphosphates as substrates. This chain is DNA-directed RNA polymerase subunit beta', found in Francisella tularensis subsp. mediasiatica (strain FSC147).